A 470-amino-acid polypeptide reads, in one-letter code: Glutamate--tRNA ligase (470 aa).

The 'HIGH' region motif lies at 9-19; it reads PSPTGYLHVGG. Positions 236-240 match the 'KMSKS' region motif; that stretch reads RLSKR. ATP is bound at residue K239.

This sequence belongs to the class-I aminoacyl-tRNA synthetase family. Glutamate--tRNA ligase type 1 subfamily. As to quaternary structure, monomer.

It localises to the cytoplasm. It catalyses the reaction tRNA(Glu) + L-glutamate + ATP = L-glutamyl-tRNA(Glu) + AMP + diphosphate. Functionally, catalyzes the attachment of glutamate to tRNA(Glu) in a two-step reaction: glutamate is first activated by ATP to form Glu-AMP and then transferred to the acceptor end of tRNA(Glu). The chain is Glutamate--tRNA ligase from Colwellia psychrerythraea (strain 34H / ATCC BAA-681) (Vibrio psychroerythus).